Reading from the N-terminus, the 462-residue chain is Tubulin gamma-1 chain (462 aa).

142 to 148 (AGGTGSG) lines the GTP pocket.

The protein belongs to the tubulin family.

The protein resides in the cytoplasm. It is found in the cytoskeleton. Its subcellular location is the microtubule organizing center. The protein localises to the centrosome. Its function is as follows. Tubulin is the major constituent of microtubules. The gamma chain is found at microtubule organizing centers (MTOC) such as the spindle poles or the centrosome, suggesting that it is involved in the minus-end nucleation of microtubule assembly. This is Tubulin gamma-1 chain from Euplotes crassus.